The primary structure comprises 227 residues: Thiamine-phosphate synthase (227 aa).

Residues glutamine 50–lysine 54 and aspartate 82 contribute to the 4-amino-2-methyl-5-(diphosphooxymethyl)pyrimidine site. Positions 83 and 102 each coordinate Mg(2+). Threonine 121 serves as a coordination point for 4-amino-2-methyl-5-(diphosphooxymethyl)pyrimidine. 2-[(2R,5Z)-2-carboxy-4-methylthiazol-5(2H)-ylidene]ethyl phosphate is bound at residue threonine 147–serine 149. Lysine 150 lines the 4-amino-2-methyl-5-(diphosphooxymethyl)pyrimidine pocket. 2-[(2R,5Z)-2-carboxy-4-methylthiazol-5(2H)-ylidene]ethyl phosphate is bound by residues glycine 178 and leucine 198 to serine 199.

The protein belongs to the thiamine-phosphate synthase family. The cofactor is Mg(2+).

The enzyme catalyses 2-[(2R,5Z)-2-carboxy-4-methylthiazol-5(2H)-ylidene]ethyl phosphate + 4-amino-2-methyl-5-(diphosphooxymethyl)pyrimidine + 2 H(+) = thiamine phosphate + CO2 + diphosphate. The catalysed reaction is 2-(2-carboxy-4-methylthiazol-5-yl)ethyl phosphate + 4-amino-2-methyl-5-(diphosphooxymethyl)pyrimidine + 2 H(+) = thiamine phosphate + CO2 + diphosphate. It catalyses the reaction 4-methyl-5-(2-phosphooxyethyl)-thiazole + 4-amino-2-methyl-5-(diphosphooxymethyl)pyrimidine + H(+) = thiamine phosphate + diphosphate. The protein operates within cofactor biosynthesis; thiamine diphosphate biosynthesis; thiamine phosphate from 4-amino-2-methyl-5-diphosphomethylpyrimidine and 4-methyl-5-(2-phosphoethyl)-thiazole: step 1/1. Functionally, condenses 4-methyl-5-(beta-hydroxyethyl)thiazole monophosphate (THZ-P) and 2-methyl-4-amino-5-hydroxymethyl pyrimidine pyrophosphate (HMP-PP) to form thiamine monophosphate (TMP). This is Thiamine-phosphate synthase from Salinibacter ruber (strain DSM 13855 / M31).